A 486-amino-acid chain; its full sequence is Wax ester synthase/diacylglycerol acyltransferase 11 (486 aa).

Over 1–192 (MGEDKKTARE…CNSGFFNKIW (192 aa)) the chain is Cytoplasmic. His144 serves as the catalytic Proton acceptor. A helical transmembrane segment spans residues 193–213 (WLFVGLWFILRLLFNTFVDIL). The Extracellular segment spans residues 214-486 (MFALTIFVLR…LERGLYEIEV (273 aa)).

The protein in the N-terminal section; belongs to the long-chain O-acyltransferase family. As to expression, mostly expressed in inflorescences and flowers, especially at the periphery of petal epidermal cells.

The protein localises to the cell membrane. Its subcellular location is the endoplasmic reticulum membrane. The enzyme catalyses an acyl-CoA + a 1,2-diacyl-sn-glycerol = a triacyl-sn-glycerol + CoA. It catalyses the reaction a long chain fatty alcohol + a fatty acyl-CoA = a wax ester + CoA. The protein operates within glycerolipid metabolism; triacylglycerol biosynthesis. Its pathway is lipid metabolism. Its function is as follows. Bifunctional wax ester synthase/diacylglycerol acyltransferase. Involved in cuticular wax biosynthesis. Required for petals development, probably by mediating the production of fatty acids at the plasma membrane in the petal epidermis acting as lubricants that makes petal elongation smooth in narrow space between the sepals and the anthers inside floral buds. The chain is Wax ester synthase/diacylglycerol acyltransferase 11 from Arabidopsis thaliana (Mouse-ear cress).